The following is a 125-amino-acid chain: MSRISNVNVPTNKRVMIGLTYIYGIGRSTAQKICQEVQVSVNKKVKDLSNQELVALRSIIESKYKVEGDLRREINLNIKKKKDIRCYEGLRHIRKLPVRGQNTHSNARTRKGKAIAIAGKKKPNK.

It belongs to the universal ribosomal protein uS13 family. In terms of assembly, part of the 30S ribosomal subunit. Forms a loose heterodimer with protein S19. Forms two bridges to the 50S subunit in the 70S ribosome.

Its function is as follows. Located at the top of the head of the 30S subunit, it contacts several helices of the 16S rRNA. In the 70S ribosome it contacts the 23S rRNA (bridge B1a) and protein L5 of the 50S subunit (bridge B1b), connecting the 2 subunits; these bridges are implicated in subunit movement. Contacts the tRNAs in the A and P-sites. The protein is Small ribosomal subunit protein uS13 of Orientia tsutsugamushi (strain Boryong) (Rickettsia tsutsugamushi).